Consider the following 317-residue polypeptide: uncharacterized protein (317 aa).

Residues 1–60 (MKHELSSMKAFVILAESSSFNNAAKLLNITQPALTRRIKKMEEDLHVQLFERTTRKVTLT) form the HTH lysR-type domain. A DNA-binding region (H-T-H motif) is located at residues 20-40 (FNNAAKLLNITQPALTRRIKK).

It belongs to the LysR transcriptional regulatory family.

This is an uncharacterized protein from Escherichia coli (strain K12).